Consider the following 224-residue polypeptide: Coiled-coil domain-containing protein 43 (224 aa).

Residue Lys95 forms a Glycyl lysine isopeptide (Lys-Gly) (interchain with G-Cter in SUMO1) linkage. Coiled coils occupy residues 121–145 (SEEE…EDEA) and 177–218 (RKLE…KRTQ). The segment covering 138 to 149 (VTDEEDEADEKD) has biased composition (acidic residues). 2 disordered regions span residues 138–157 (VTDE…TTMN) and 176–224 (ARKL…ERKR). Residue Thr139 is modified to Phosphothreonine. A compositionally biased stretch (basic and acidic residues) spans 176–211 (ARKLERDSLRDESQRKKEQDKLQRERDKLAKQERKE). The span at 212–224 (KEKKRTQRGERKR) shows a compositional bias: basic residues.

This sequence belongs to the CCDC43 family.

The polypeptide is Coiled-coil domain-containing protein 43 (CCDC43) (Homo sapiens (Human)).